The chain runs to 133 residues: Interleukin-4 (133 aa).

The signal sequence occupies residues 1–24 (MGLTYQLIPALVCLLAFTSTFVHG). Asn28, Asn45, Asn62, Asn84, Asn96, and Asn102 each carry an N-linked (GlcNAc...) asparagine glycan. 2 disulfide bridges follow: Cys48–Cys85 and Cys70–Cys113.

Belongs to the IL-4/IL-13 family.

It localises to the secreted. Functionally, participates in at least several B-cell activation processes as well as of other cell types. It is a costimulator of DNA-synthesis. It induces the expression of class II MHC molecules on resting B-cells. It enhances both secretion and cell surface expression of IgE and IgG1. It also regulates the expression of the low affinity Fc receptor for IgE (CD23) on both lymphocytes and monocytes. Positively regulates IL31RA expression in macrophages. Stimulates autophagy in dendritic cells by interfering with mTORC1 signaling and through the induction of RUFY4. This chain is Interleukin-4 (IL4), found in Felis catus (Cat).